Consider the following 310-residue polypeptide: Olfactory receptor 8I2 (310 aa).

Residues 1 to 25 (MAGNNFTEVTVFILSGFANHPELQV) are Extracellular-facing. Asn-5 carries N-linked (GlcNAc...) asparagine glycosylation. The chain crosses the membrane as a helical span at residues 26-46 (SLFLMFLFIYLFTVLGNLGLI). At 47–54 (TLIRMDSQ) the chain is on the cytoplasmic side. Residues 55-75 (LHTPMYFFLSNLAFIDIFYSS) traverse the membrane as a helical segment. The Extracellular segment spans residues 76–99 (TVTPKALVNFQSNRRSISFVGCFV). Cys-97 and Cys-188 are joined by a disulfide. A helical membrane pass occupies residues 100 to 120 (QMYFFVGLVCCECFLLGSMAY). The Cytoplasmic segment spans residues 121–139 (NRYIAICNPLLYSVVMSQK). Residues 140–160 (VSNWLGVMPYVIGFTSSLISV) traverse the membrane as a helical segment. Residues 161-196 (WVISSLAFCDSSINHFFCDTTALLALSCVDTFGTEM) are Extracellular-facing. Residues 197 to 216 (VSFVLAGFTLLSSLLIITVT) traverse the membrane as a helical segment. Topologically, residues 217–236 (YIIIISAILRIQSAAGRQKA) are cytoplasmic. A helical membrane pass occupies residues 237-257 (FSTCASHLMAVTIFYGSLIFT). Topologically, residues 258 to 270 (YLQPDNTSSLTQA) are extracellular. The chain crosses the membrane as a helical span at residues 271–291 (QVASVFYTIVIPMLNPLIYSL). Topologically, residues 292-310 (RNKDVKNALLRVIHRKLFP) are cytoplasmic.

The protein belongs to the G-protein coupled receptor 1 family.

It is found in the cell membrane. Its function is as follows. Odorant receptor. In Homo sapiens (Human), this protein is Olfactory receptor 8I2 (OR8I2).